A 443-amino-acid chain; its full sequence is Endoplasmic reticulum protein SC65 (443 aa).

The signal sequence occupies residues 1-18 (MARAAWGLLWLLLGSAGA). Residues 81–102 (SGPATSQPRPAPGPDGDNEGDG) are disordered. N367 carries an N-linked (GlcNAc...) asparagine glycan. 3 stretches are compositionally biased toward acidic residues: residues 387–398 (DEMELEETESLP), 407–419 (AEFE…EEGL), and 431–443 (GDED…PELA). The disordered stretch occupies residues 387–443 (DEMELEETESLPEPEKPLSDAEFEGEGDYEEGLYADWWQEPDAKGDEDEAEPEPELA).

This sequence belongs to the leprecan family. In terms of assembly, interacts with PLOD1, P3H3 and PPIB. Identified in a complex with PLOD1 and P3H3. As to expression, found in testis, brain, heart and at a much lower level in liver.

It localises to the endoplasmic reticulum. Part of a complex composed of PLOD1, P3H3 and P3H4 that catalyzes hydroxylation of lysine residues in collagen alpha chains and is required for normal assembly and cross-linking of collagen fibrils. Required for normal bone density and normal skin stability via its role in hydroxylation of lysine residues in collagen alpha chains and in collagen fibril assembly. In Rattus norvegicus (Rat), this protein is Endoplasmic reticulum protein SC65.